Consider the following 415-residue polypeptide: Gamma-glutamyl phosphate reductase (415 aa).

Belongs to the gamma-glutamyl phosphate reductase family.

The protein localises to the cytoplasm. It carries out the reaction L-glutamate 5-semialdehyde + phosphate + NADP(+) = L-glutamyl 5-phosphate + NADPH + H(+). Its pathway is amino-acid biosynthesis; L-proline biosynthesis; L-glutamate 5-semialdehyde from L-glutamate: step 2/2. In terms of biological role, catalyzes the NADPH-dependent reduction of L-glutamate 5-phosphate into L-glutamate 5-semialdehyde and phosphate. The product spontaneously undergoes cyclization to form 1-pyrroline-5-carboxylate. The protein is Gamma-glutamyl phosphate reductase of Oceanobacillus iheyensis (strain DSM 14371 / CIP 107618 / JCM 11309 / KCTC 3954 / HTE831).